Consider the following 83-residue polypeptide: High-potential iron-sulfur protein (83 aa).

[4Fe-4S] cluster contacts are provided by Cys-43, Cys-46, Cys-61, and Cys-75.

This sequence belongs to the high-potential iron-sulfur protein (HiPIP) family. In terms of assembly, homodimer.

Its subcellular location is the periplasm. Functionally, specific class of high-redox-potential 4Fe-4S ferredoxins. Functions in anaerobic electron transport in most purple and in some other photosynthetic bacteria and in at least one genus (Paracoccus) of halophilic, denitrifying bacteria. This Thiocystis violacea protein is High-potential iron-sulfur protein.